A 272-amino-acid chain; its full sequence is Cerberus (272 aa).

The N-terminal stretch at 1–19 is a signal peptide; sequence MSLLLLQLLVLSCLGDTEP. Cystine bridges form between Cys168–Cys215, Cys182–Cys229, Cys192–Cys245, and Cys196–Cys247. Residues 168–253 form the CTCK domain; the sequence is CRTLPFSQSV…ECNCETQKIE (86 aa). A glycan (N-linked (GlcNAc...) asparagine) is linked at Asn228.

Belongs to the DAN family.

The protein localises to the secreted. Cytokine that acts as a regulator of the activity of Nodal/BMP pathways during the establishment of bilateral asymmetry in the head and trunk of the embryo. The sequence is that of Cerberus (CER1) from Gallus gallus (Chicken).